Here is a 173-residue protein sequence, read N- to C-terminus: Probable capsid assembly scaffolding protein (173 aa).

Residues 1 to 30 (MSDTATTEGTPAGDPTPVVTDKPLEPTPKT) are disordered. Residues 36–56 (VKELRQEAAAARVAKKDAVEA) are a coiled coil.

This sequence belongs to the L5likevirus scaffolding protein family.

Functionally, scaffolding protein involved in the icosahedric procapsid assembly. Coassembles with the capsid proteins to form the procapsid, in which the scaffolding protein is found within the external shell of icosahedrally arranged capsid protein subunits. The protein is Probable capsid assembly scaffolding protein (16) of Mycobacterium (Mycobacteriophage D29).